A 510-amino-acid chain; its full sequence is Glycerol kinase (510 aa).

Thr-14 serves as a coordination point for ADP. Residues Thr-14 and Thr-15 each coordinate ATP. A sn-glycerol 3-phosphate-binding site is contributed by Thr-14. Arg-18 provides a ligand contact to ADP. Positions 84, 85, 136, and 256 each coordinate sn-glycerol 3-phosphate. Residues Arg-84, Glu-85, Tyr-136, Asp-256, and Gln-257 each contribute to the glycerol site. Positions 278, 322, 422, and 426 each coordinate ADP. The ATP site is built by Thr-278, Gly-322, and Gly-422.

This sequence belongs to the FGGY kinase family.

The catalysed reaction is glycerol + ATP = sn-glycerol 3-phosphate + ADP + H(+). The protein operates within polyol metabolism; glycerol degradation via glycerol kinase pathway; sn-glycerol 3-phosphate from glycerol: step 1/1. Its function is as follows. Key enzyme in the regulation of glycerol uptake and metabolism. Catalyzes the phosphorylation of glycerol to yield sn-glycerol 3-phosphate. It also catalyzes the phosphorylation of dihydroxyacetone (DHA). Involved, together with the DHA kinase DhaKLM, in the metabolism of DHA. This is Glycerol kinase from Haloferax volcanii (strain ATCC 29605 / DSM 3757 / JCM 8879 / NBRC 14742 / NCIMB 2012 / VKM B-1768 / DS2) (Halobacterium volcanii).